The sequence spans 616 residues: Glutamine--fructose-6-phosphate aminotransferase [isomerizing] (616 aa).

Residue Cys-2 is the Nucleophile; for GATase activity of the active site. Residues 2–222 form the Glutamine amidotransferase type-2 domain; that stretch reads CGIIGYSGPR…QERIVALSGD (221 aa). The segment at 70–89 is disordered; the sequence is TGIGHTRWATHGEPSDRNAH. 2 consecutive SIS domains span residues 289-428 and 461-606; these read IRDD…LRGF and LAHW…VDRP. The active-site For Fru-6P isomerization activity is the Lys-611.

As to quaternary structure, homodimer.

It is found in the cytoplasm. The catalysed reaction is D-fructose 6-phosphate + L-glutamine = D-glucosamine 6-phosphate + L-glutamate. Functionally, catalyzes the first step in hexosamine metabolism, converting fructose-6P into glucosamine-6P using glutamine as a nitrogen source. The polypeptide is Glutamine--fructose-6-phosphate aminotransferase [isomerizing] (Tropheryma whipplei (strain TW08/27) (Whipple's bacillus)).